The sequence spans 230 residues: 5'-methylthioadenosine/S-adenosylhomocysteine nucleosidase (230 aa).

E12 serves as the catalytic Proton acceptor. Substrate is bound by residues G78, I153, and 174–175 (ME). D198 serves as the catalytic Proton donor.

The protein belongs to the PNP/UDP phosphorylase family. MtnN subfamily.

The enzyme catalyses S-adenosyl-L-homocysteine + H2O = S-(5-deoxy-D-ribos-5-yl)-L-homocysteine + adenine. It carries out the reaction S-methyl-5'-thioadenosine + H2O = 5-(methylsulfanyl)-D-ribose + adenine. It catalyses the reaction 5'-deoxyadenosine + H2O = 5-deoxy-D-ribose + adenine. The protein operates within amino-acid biosynthesis; L-methionine biosynthesis via salvage pathway; S-methyl-5-thio-alpha-D-ribose 1-phosphate from S-methyl-5'-thioadenosine (hydrolase route): step 1/2. Catalyzes the irreversible cleavage of the glycosidic bond in both 5'-methylthioadenosine (MTA) and S-adenosylhomocysteine (SAH/AdoHcy) to adenine and the corresponding thioribose, 5'-methylthioribose and S-ribosylhomocysteine, respectively. Also cleaves 5'-deoxyadenosine, a toxic by-product of radical S-adenosylmethionine (SAM) enzymes, into 5-deoxyribose and adenine. This Shewanella halifaxensis (strain HAW-EB4) protein is 5'-methylthioadenosine/S-adenosylhomocysteine nucleosidase.